A 545-amino-acid chain; its full sequence is DNA mismatch repair protein MutL (545 aa).

The disordered stretch occupies residues 517–545; sequence RRSGARGGGEARPRPQEESFPEAPLPREP.

This sequence belongs to the DNA mismatch repair MutL/HexB family.

This protein is involved in the repair of mismatches in DNA. It is required for dam-dependent methyl-directed DNA mismatch repair. May act as a 'molecular matchmaker', a protein that promotes the formation of a stable complex between two or more DNA-binding proteins in an ATP-dependent manner without itself being part of a final effector complex. The chain is DNA mismatch repair protein MutL from Thermus thermophilus (strain ATCC 27634 / DSM 579 / HB8).